Consider the following 135-residue polypeptide: Early E3 15.3 kDa protein (135 aa).

It belongs to the adenoviridae E3_15 family.

Functionally, protects virus-infected cells from TNF-induced cytolysis. This is Early E3 15.3 kDa protein from Human adenovirus B serotype 7 (HAdV-7).